The following is a 970-amino-acid chain: Serine/threonine-protein kinase PLK4 (970 aa).

The Protein kinase domain maps to 12 to 265; that stretch reads FKVGNLLGKG…LSSVLDHPFM (254 aa). ATP is bound by residues 18-26 and K41; that span reads LGKGSFAGV. N6-acetyllysine is present on residues K45 and K46. Catalysis depends on D136, which acts as the Proton acceptor. The disordered stretch occupies residues 324 to 373; that stretch reads VFPKNKSSSDFSSSGDGNSFYTQWGNQETSNSGRGRVIQDAEERPHSRYL. A compositionally biased stretch (low complexity) spans 327–343; it reads KNKSSSDFSSSGDGNSF. Residues 344–356 show a composition bias toward polar residues; sequence YTQWGNQETSNSG. Positions 360 to 369 are enriched in basic and acidic residues; it reads VIQDAEERPH. A Phosphoserine modification is found at S401. The interval 498–540 is disordered; it reads ISPTRDFQGHPDLQKDTSKNAWTDTKVKKNSDASDNAHSVKQP. Residues 504–515 are compositionally biased toward basic and acidic residues; that stretch reads FQGHPDLQKDTS. Over residues 530–540 the composition is skewed to polar residues; the sequence is ASDNAHSVKQP. The Cryptic POLO box 1 (CPB1) domain maps to 586–699; it reads TLRSITSPLV…SRFVQLVRSK (114 aa). S665 is modified (phosphoserine). One can recognise a Cryptic POLO box 2 (CPB2) domain in the interval 700–813; sequence SPKITYFTRY…GRKPGSTSSP (114 aa). Residues 808–829 form a disordered region; sequence GSTSSPKALSPPPSVDSNYPTR. S817 carries the phosphoserine modification. Residues 886–964 form the POLO box domain; the sequence is QLLKSVFVKN…LSSILLMFSN (79 aa).

The protein belongs to the protein kinase superfamily. Ser/Thr protein kinase family. CDC5/Polo subfamily. Homodimer. Interacts with CEP152 (via N-terminus). Interacts with CEP78; this interaction may be important for proper PLK4 localization to the centriole and PLK4-induced overduplication of centrioles. Interacts with CEP131. Interacts simultaneously with TENT5C and CEP192. Interacts with TENT5C; this interaction leads to the TENT5C recruitment in the centrosome. Interacts with CEP85; this interaction may be important in cell migration and centriole assembly. Ubiquitinated; leading to its degradation by the proteasome. Deubiquitinated by USP54; leading to PLK4 stabilization. Post-translationally, tyrosine-phosphorylated by TEC. In terms of processing, acetylation by KAT2A and KAT2B impairs kinase activity by shifting the kinase to an inactive conformation.

It localises to the cytoplasm. Its subcellular location is the cytoskeleton. The protein localises to the microtubule organizing center. The protein resides in the centrosome. It is found in the centriole. It localises to the nucleus. Its subcellular location is the nucleolus. The protein localises to the cleavage furrow. The enzyme catalyses L-seryl-[protein] + ATP = O-phospho-L-seryl-[protein] + ADP + H(+). It catalyses the reaction L-threonyl-[protein] + ATP = O-phospho-L-threonyl-[protein] + ADP + H(+). In terms of biological role, serine/threonine-protein kinase that plays a central role in centriole duplication. Able to trigger procentriole formation on the surface of the parental centriole cylinder, leading to the recruitment of centriole biogenesis proteins such as SASS6, CPAP, CCP110, CEP135 and gamma-tubulin. When overexpressed, it is able to induce centrosome amplification through the simultaneous generation of multiple procentrioles adjoining each parental centriole during S phase. Phosphorylates 'Ser-151' of FBXW5 during the G1/S transition, leading to inhibit FBXW5 ability to ubiquitinate SASS6. Its central role in centriole replication suggests a possible role in tumorigenesis, centrosome aberrations being frequently observed in tumors. Also involved in deuterosome-mediated centriole amplification in multiciliated that can generate more than 100 centrioles. Also involved in trophoblast differentiation by phosphorylating HAND1, leading to disrupt the interaction between HAND1 and MDFIC and activate HAND1. Phosphorylates CDC25C and CHEK2. Required for the recruitment of STIL to the centriole and for STIL-mediated centriole amplification. Phosphorylates CEP131 and PCM1 which is essential for proper organization and integrity of centriolar satellites. This chain is Serine/threonine-protein kinase PLK4, found in Pongo abelii (Sumatran orangutan).